Here is a 297-residue protein sequence, read N- to C-terminus: Probable oxidoreductase (297 aa).

Residue 9 to 33 (VVTGGASGLGAETVRALAAAGAEVT) coordinates NAD(+). Residue Ser138 participates in substrate binding. The Proton acceptor role is filled by Tyr164.

Belongs to the short-chain dehydrogenases/reductases (SDR) family.

In Streptomyces lividans, this protein is Probable oxidoreductase.